The following is a 361-amino-acid chain: Queuine tRNA-ribosyltransferase (361 aa).

Residue Asp-92 is the Proton acceptor of the active site. Substrate contacts are provided by residues 92–96 (DSGGF), Asp-146, Gln-189, and Gly-216. Positions 247–253 (GVGKPAD) are RNA binding. Asp-266 acts as the Nucleophile in catalysis. The RNA binding; important for wobble base 34 recognition stretch occupies residues 271–275 (TRAGR). Zn(2+) is bound by residues Cys-304, Cys-306, Cys-309, and His-335.

The protein belongs to the queuine tRNA-ribosyltransferase family. As to quaternary structure, homodimer. Within each dimer, one monomer is responsible for RNA recognition and catalysis, while the other monomer binds to the replacement base PreQ1. Zn(2+) serves as cofactor.

It carries out the reaction 7-aminomethyl-7-carbaguanine + guanosine(34) in tRNA = 7-aminomethyl-7-carbaguanosine(34) in tRNA + guanine. The protein operates within tRNA modification; tRNA-queuosine biosynthesis. In terms of biological role, catalyzes the base-exchange of a guanine (G) residue with the queuine precursor 7-aminomethyl-7-deazaguanine (PreQ1) at position 34 (anticodon wobble position) in tRNAs with GU(N) anticodons (tRNA-Asp, -Asn, -His and -Tyr). Catalysis occurs through a double-displacement mechanism. The nucleophile active site attacks the C1' of nucleotide 34 to detach the guanine base from the RNA, forming a covalent enzyme-RNA intermediate. The proton acceptor active site deprotonates the incoming PreQ1, allowing a nucleophilic attack on the C1' of the ribose to form the product. After dissociation, two additional enzymatic reactions on the tRNA convert PreQ1 to queuine (Q), resulting in the hypermodified nucleoside queuosine (7-(((4,5-cis-dihydroxy-2-cyclopenten-1-yl)amino)methyl)-7-deazaguanosine). This chain is Queuine tRNA-ribosyltransferase, found in Rickettsia massiliae (strain Mtu5).